Here is a 565-residue protein sequence, read N- to C-terminus: DNA-directed RNA polymerase subunit beta C-terminal section (565 aa).

It belongs to the RNA polymerase beta chain family. In plastids the minimal PEP RNA polymerase catalytic core is composed of four subunits: alpha, beta, beta', and beta''. When a (nuclear-encoded) sigma factor is associated with the core the holoenzyme is formed, which can initiate transcription.

The protein localises to the plastid. Its subcellular location is the chloroplast. The catalysed reaction is RNA(n) + a ribonucleoside 5'-triphosphate = RNA(n+1) + diphosphate. Its function is as follows. DNA-dependent RNA polymerase catalyzes the transcription of DNA into RNA using the four ribonucleoside triphosphates as substrates. In Tetradesmus obliquus (Green alga), this protein is DNA-directed RNA polymerase subunit beta C-terminal section (rpoB2).